Here is a 252-residue protein sequence, read N- to C-terminus: Phosphate import ATP-binding protein PstB 1 (252 aa).

In terms of domain architecture, ABC transporter spans 6 to 247 (ISSKDLHLYY…PKEKQTEDYI (242 aa)). 38-45 (GPSGCGKS) contributes to the ATP binding site.

The protein belongs to the ABC transporter superfamily. Phosphate importer (TC 3.A.1.7) family. The complex is composed of two ATP-binding proteins (PstB), two transmembrane proteins (PstC and PstA) and a solute-binding protein (PstS).

It localises to the cell membrane. The enzyme catalyses phosphate(out) + ATP + H2O = ADP + 2 phosphate(in) + H(+). In terms of biological role, part of the ABC transporter complex PstSACB involved in phosphate import. Responsible for energy coupling to the transport system. This chain is Phosphate import ATP-binding protein PstB 1, found in Enterococcus faecalis (strain ATCC 700802 / V583).